The following is a 96-amino-acid chain: MTKSELIERLVMKYPQLRAQDVEDTVKLMIERICHTLEKGDRVEIRGFGSFSLHYRESRQGRNPKTGESVRVPAKSIPYFRAGKELRERVDEEINQ.

The protein belongs to the bacterial histone-like protein family. Heterodimer of an alpha and a beta chain.

In terms of biological role, this protein is one of the two subunits of integration host factor, a specific DNA-binding protein that functions in genetic recombination as well as in transcriptional and translational control. The sequence is that of Integration host factor subunit beta from Dichelobacter nodosus (strain VCS1703A).